Consider the following 173-residue polypeptide: Flagellar biosynthetic protein FliV (173 aa).

This sequence belongs to the FliB family.

Its function is as follows. Required for the secretion of flagellin and expression of motility. In Salmonella muenchen, this protein is Flagellar biosynthetic protein FliV (fliV).